The following is a 556-amino-acid chain: Innexin-7 (556 aa).

The next 3 helical transmembrane spans lie at 21 to 41 (LVASIHSFLTSNLLVGLAVLI), 127 to 147 (FFLLFEAACFRLPCFIWKYFA), and 213 to 233 (AYYVTFIYFVAKVAFLLNVIL). Asn-267 carries an N-linked (GlcNAc...) asparagine glycan. Residues 310–330 (IFVFLWAWYILLTAFTVGNLF) form a helical membrane-spanning segment. Residues 431–556 (DESQVESGKN…IPKTAEKKHW (126 aa)) are disordered. A compositionally biased stretch (polar residues) spans 435–447 (VESGKNTAPSTSH). Over residues 452 to 461 (RGTEQLEKNV) the composition is skewed to basic and acidic residues. Residues 463–474 (SRQGSLSTQLRP) are compositionally biased toward polar residues. Positions 500 to 513 (KGSKKPSPTKKKAS) are enriched in basic residues. Residues 514–527 (SKNSPQSSSNSRRP) are compositionally biased toward low complexity. Residues 539–556 (HHHEPDSKIPKTAEKKHW) are compositionally biased toward basic and acidic residues.

This sequence belongs to the pannexin family.

The protein localises to the cell membrane. The protein resides in the cell junction. Its subcellular location is the gap junction. Structural component of the gap junctions. This chain is Innexin-7 (inx-7), found in Caenorhabditis elegans.